The primary structure comprises 474 residues: 2-succinylbenzoate--CoA ligase (474 aa).

The protein belongs to the ATP-dependent AMP-binding enzyme family. MenE subfamily.

It catalyses the reaction 2-succinylbenzoate + ATP + CoA = 2-succinylbenzoyl-CoA + AMP + diphosphate. It participates in quinol/quinone metabolism; 1,4-dihydroxy-2-naphthoate biosynthesis; 1,4-dihydroxy-2-naphthoate from chorismate: step 5/7. The protein operates within quinol/quinone metabolism; menaquinone biosynthesis. Its function is as follows. Converts 2-succinylbenzoate (OSB) to 2-succinylbenzoyl-CoA (OSB-CoA). In Staphylococcus epidermidis (strain ATCC 35984 / DSM 28319 / BCRC 17069 / CCUG 31568 / BM 3577 / RP62A), this protein is 2-succinylbenzoate--CoA ligase.